The primary structure comprises 140 residues: Small ribosomal subunit protein uS12 (140 aa).

The interval 1-44 (MPTFNQLVRKGRKTMEKNSQAPALQKGFNSLRKKTTDASAPQKR) is disordered. A 3-methylthioaspartic acid modification is found at Asp102. The interval 120–140 (VAKRRQARSKYGAKRPKEAKK) is disordered. Positions 121–140 (AKRRQARSKYGAKRPKEAKK) are enriched in basic residues.

It belongs to the universal ribosomal protein uS12 family. As to quaternary structure, part of the 30S ribosomal subunit. Contacts proteins S8 and S17. May interact with IF1 in the 30S initiation complex.

Functionally, with S4 and S5 plays an important role in translational accuracy. Its function is as follows. Interacts with and stabilizes bases of the 16S rRNA that are involved in tRNA selection in the A site and with the mRNA backbone. Located at the interface of the 30S and 50S subunits, it traverses the body of the 30S subunit contacting proteins on the other side and probably holding the rRNA structure together. The combined cluster of proteins S8, S12 and S17 appears to hold together the shoulder and platform of the 30S subunit. In Lachnoclostridium phytofermentans (strain ATCC 700394 / DSM 18823 / ISDg) (Clostridium phytofermentans), this protein is Small ribosomal subunit protein uS12.